The primary structure comprises 153 residues: Mitochondrial fission 1 protein (153 aa).

Over M1–G124 the chain is Cytoplasmic. A TPR repeat occupies R73 to N106. The helical transmembrane segment at L125–L145 threads the bilayer. Topologically, residues L146 to R153 are mitochondrial intermembrane.

The protein belongs to the FIS1 family.

The protein resides in the mitochondrion outer membrane. Functionally, has a role in mitochondrial fission. Has a role in outer membrane fission but not matrix separation. This chain is Mitochondrial fission 1 protein (mtp-2), found in Neurospora crassa (strain ATCC 24698 / 74-OR23-1A / CBS 708.71 / DSM 1257 / FGSC 987).